The chain runs to 439 residues: Kinesin-like protein KIN-13 (439 aa).

ATP is bound at residue 1–5 (GSGKS). The Kinesin motor domain occupies 1-240 (GSGKSFTMMH…LRYADRVKEL (240 aa)).

The protein belongs to the TRAFAC class myosin-kinesin ATPase superfamily. Kinesin family. KIN-13 subfamily. In terms of assembly, interacts with PLK. Post-translationally, phosphorylated by PLK.

The protein resides in the cytoplasm. Its subcellular location is the cytoskeleton. It localises to the cell projection. The protein localises to the cilium. It is found in the flagellum. The protein resides in the flagellum basal body. Its subcellular location is the flagellum axoneme. It localises to the spindle. The protein localises to the chromosome. It is found in the centromere. The protein resides in the kinetochore. Functionally, involved in cell cycle. Involved in formation of flagella, regulation of flagellar length, and formation of median bodies during interphase. Regulates flagellar length in all eight distal flagellar tips by promoting disassembly of the microtubules. Disassembles microtubules at the distal flagellar tips in a length-dependent manner in order to maintain different equilibrium lengths of the four flagellar pairs. Regulates interphase and mitotic microtubule dynamics. Regulates microtubule disassembly dynamics of the dual mitotic spindles and the median body. The sequence is that of Kinesin-like protein KIN-13 from Giardia intestinalis (Giardia lamblia).